The following is a 430-amino-acid chain: GTPase Obg (430 aa).

The 158-residue stretch at M1–L158 folds into the Obg domain. Residues R118 to P145 are disordered. An OBG-type G domain is found at A159–E329. Residues G165–S172, F190–K194, D212–G215, N282–D285, and S310–I312 contribute to the GTP site. Mg(2+) is bound by residues S172 and T192. The 79-residue stretch at K352–E430 folds into the OCT domain.

This sequence belongs to the TRAFAC class OBG-HflX-like GTPase superfamily. OBG GTPase family. Monomer. Mg(2+) is required as a cofactor.

Its subcellular location is the cytoplasm. In terms of biological role, an essential GTPase which binds GTP, GDP and possibly (p)ppGpp with moderate affinity, with high nucleotide exchange rates and a fairly low GTP hydrolysis rate. Plays a role in control of the cell cycle, stress response, ribosome biogenesis and in those bacteria that undergo differentiation, in morphogenesis control. The sequence is that of GTPase Obg from Staphylococcus epidermidis (strain ATCC 12228 / FDA PCI 1200).